The following is a 603-amino-acid chain: Aspartate--tRNA(Asp/Asn) ligase (603 aa).

Residue Glu187 participates in L-aspartate binding. An aspartate region spans residues 211–214; that stretch reads QQFK. Arg233 and His461 together coordinate L-aspartate. Position 233-235 (233-235) interacts with ATP; it reads RDE. Position 495 (Glu495) interacts with ATP. An L-aspartate-binding site is contributed by Arg502. 547-550 is an ATP binding site; that stretch reads GLDR.

The protein belongs to the class-II aminoacyl-tRNA synthetase family. Type 1 subfamily. Homodimer.

It localises to the cytoplasm. The enzyme catalyses tRNA(Asx) + L-aspartate + ATP = L-aspartyl-tRNA(Asx) + AMP + diphosphate. In terms of biological role, aspartyl-tRNA synthetase with relaxed tRNA specificity since it is able to aspartylate not only its cognate tRNA(Asp) but also tRNA(Asn). Reaction proceeds in two steps: L-aspartate is first activated by ATP to form Asp-AMP and then transferred to the acceptor end of tRNA(Asp/Asn). The sequence is that of Aspartate--tRNA(Asp/Asn) ligase from Chlorobaculum parvum (strain DSM 263 / NCIMB 8327) (Chlorobium vibrioforme subsp. thiosulfatophilum).